Consider the following 297-residue polypeptide: 4-hydroxy-tetrahydrodipicolinate synthase (297 aa).

Residue threonine 50 participates in pyruvate binding. The active-site Proton donor/acceptor is the tyrosine 138. Lysine 166 serves as the catalytic Schiff-base intermediate with substrate. Isoleucine 208 is a pyruvate binding site.

This sequence belongs to the DapA family. As to quaternary structure, homotetramer; dimer of dimers.

The protein resides in the cytoplasm. It catalyses the reaction L-aspartate 4-semialdehyde + pyruvate = (2S,4S)-4-hydroxy-2,3,4,5-tetrahydrodipicolinate + H2O + H(+). Its pathway is amino-acid biosynthesis; L-lysine biosynthesis via DAP pathway; (S)-tetrahydrodipicolinate from L-aspartate: step 3/4. Its function is as follows. Catalyzes the condensation of (S)-aspartate-beta-semialdehyde [(S)-ASA] and pyruvate to 4-hydroxy-tetrahydrodipicolinate (HTPA). The chain is 4-hydroxy-tetrahydrodipicolinate synthase from Gluconobacter oxydans (strain 621H) (Gluconobacter suboxydans).